We begin with the raw amino-acid sequence, 137 residues long: Small ribosomal subunit protein uS9 (137 aa).

Residues 103–137 (PPLKAEGYLTRDPRAKERKKYGLHKARKAPQYSKR) form a disordered region. A compositionally biased stretch (basic residues) spans 118–137 (KERKKYGLHKARKAPQYSKR).

Belongs to the universal ribosomal protein uS9 family.

The sequence is that of Small ribosomal subunit protein uS9 from Crocosphaera subtropica (strain ATCC 51142 / BH68) (Cyanothece sp. (strain ATCC 51142)).